A 363-amino-acid chain; its full sequence is Fructose-bisphosphate aldolase 1 (363 aa).

Aspartate 34 contacts dihydroxyacetone phosphate. Residues serine 36 and threonine 39 each contribute to the D-glyceraldehyde 3-phosphate site. Arginine 43 contacts beta-D-fructose 1,6-bisphosphate. Lysine 107 provides a ligand contact to D-glyceraldehyde 3-phosphate. Lysine 146 is a dihydroxyacetone phosphate binding site. D-glyceraldehyde 3-phosphate is bound at residue glutamate 189. The active-site Proton acceptor is glutamate 189. 3 residues coordinate dihydroxyacetone phosphate: lysine 231, serine 273, and glycine 274. The active-site Schiff-base intermediate with dihydroxyacetone phosphate is the lysine 231. Beta-D-fructose 1,6-bisphosphate is bound by residues 273 to 275 (SGG) and serine 301. The dihydroxyacetone phosphate site is built by glycine 303 and arginine 304. A beta-D-fructose 1,6-bisphosphate-binding site is contributed by arginine 304.

It belongs to the class I fructose-bisphosphate aldolase family. Homotetramer. Component of a complex, at least composed of ald-1, microneme protein MIC2 and ACT1. Interacts with microneme protein MIC2 (via cytoplasmic tail). Interacts with ACT1 (F-actin).

The protein localises to the cytoplasm. The catalysed reaction is beta-D-fructose 1,6-bisphosphate = D-glyceraldehyde 3-phosphate + dihydroxyacetone phosphate. It functions in the pathway carbohydrate degradation; glycolysis; D-glyceraldehyde 3-phosphate and glycerone phosphate from D-glucose: step 4/4. Its function is as follows. Plays a key role in glycolysis by catalyzing the cleavage of fructose 1,6-bisphosphate into dihydroxyacetone phosphate and glyceraldehyde 3-phosphate. Forms a bridge between cell surface adhesins and the actin cytoskeleton. Required for parasite invasion of host cells. The chain is Fructose-bisphosphate aldolase 1 from Toxoplasma gondii.